A 182-amino-acid chain; its full sequence is Small ribosomal subunit protein uS4c (182 aa).

The segment at 13–34 (GLTSKRPRSGSDPKNQLRSGKR) is disordered. In terms of domain architecture, S4 RNA-binding spans 82–143 (MRLDNILFRL…KQRSKALIQN (62 aa)).

It belongs to the universal ribosomal protein uS4 family. Part of the 30S ribosomal subunit. Contacts protein S5. The interaction surface between S4 and S5 is involved in control of translational fidelity.

The protein localises to the plastid. It is found in the chloroplast. Its function is as follows. One of the primary rRNA binding proteins, it binds directly to 16S rRNA where it nucleates assembly of the body of the 30S subunit. Functionally, with S5 and S12 plays an important role in translational accuracy. The polypeptide is Small ribosomal subunit protein uS4c (rps4) (Iris lutescens (Crimean iris)).